The primary structure comprises 185 residues: Adenylate kinase (185 aa).

Residue 8 to 16 (GIPGSGSTT) coordinates ATP.

The protein belongs to the archaeal adenylate kinase family.

It is found in the cytoplasm. The enzyme catalyses AMP + ATP = 2 ADP. The sequence is that of Adenylate kinase (adkA) from Methanothermobacter thermautotrophicus (strain ATCC 29096 / DSM 1053 / JCM 10044 / NBRC 100330 / Delta H) (Methanobacterium thermoautotrophicum).